The following is a 289-amino-acid chain: 4-hydroxy-tetrahydrodipicolinate synthase (289 aa).

T44 is a pyruvate binding site. Catalysis depends on Y132, which acts as the Proton donor/acceptor. The Schiff-base intermediate with substrate role is filled by K161. Position 201 (I201) interacts with pyruvate.

Belongs to the DapA family. Homotetramer; dimer of dimers.

It localises to the cytoplasm. It carries out the reaction L-aspartate 4-semialdehyde + pyruvate = (2S,4S)-4-hydroxy-2,3,4,5-tetrahydrodipicolinate + H2O + H(+). It functions in the pathway amino-acid biosynthesis; L-lysine biosynthesis via DAP pathway; (S)-tetrahydrodipicolinate from L-aspartate: step 3/4. Its function is as follows. Catalyzes the condensation of (S)-aspartate-beta-semialdehyde [(S)-ASA] and pyruvate to 4-hydroxy-tetrahydrodipicolinate (HTPA). This Methanocaldococcus jannaschii (strain ATCC 43067 / DSM 2661 / JAL-1 / JCM 10045 / NBRC 100440) (Methanococcus jannaschii) protein is 4-hydroxy-tetrahydrodipicolinate synthase.